Consider the following 283-residue polypeptide: Bifunctional protein FolD (283 aa).

NADP(+)-binding positions include 157–159 and Ile-224; that span reads GNG.

The protein belongs to the tetrahydrofolate dehydrogenase/cyclohydrolase family. As to quaternary structure, homodimer.

The enzyme catalyses (6R)-5,10-methylene-5,6,7,8-tetrahydrofolate + NADP(+) = (6R)-5,10-methenyltetrahydrofolate + NADPH. It catalyses the reaction (6R)-5,10-methenyltetrahydrofolate + H2O = (6R)-10-formyltetrahydrofolate + H(+). The protein operates within one-carbon metabolism; tetrahydrofolate interconversion. Functionally, catalyzes the oxidation of 5,10-methylenetetrahydrofolate to 5,10-methenyltetrahydrofolate and then the hydrolysis of 5,10-methenyltetrahydrofolate to 10-formyltetrahydrofolate. This is Bifunctional protein FolD from Mycoplasmoides gallisepticum (strain R(low / passage 15 / clone 2)) (Mycoplasma gallisepticum).